The sequence spans 163 residues: Probable chemoreceptor glutamine deamidase CheD (163 aa).

It belongs to the CheD family.

The catalysed reaction is L-glutaminyl-[protein] + H2O = L-glutamyl-[protein] + NH4(+). Its function is as follows. Probably deamidates glutamine residues to glutamate on methyl-accepting chemotaxis receptors (MCPs), playing an important role in chemotaxis. The protein is Probable chemoreceptor glutamine deamidase CheD of Borreliella burgdorferi (strain ATCC 35210 / DSM 4680 / CIP 102532 / B31) (Borrelia burgdorferi).